Here is a 92-residue protein sequence, read N- to C-terminus: MKLALALCAAFLLVVLVQAEQECTPGQTKKQDCNTCNCTPTGVWACTRKGCPPHKREVTCEPGTTFKDKCNTCRCGSDGKSAACTLKACPQK.

Positions 1–19 are cleaved as a signal peptide; sequence MKLALALCAAFLLVVLVQA. Pacifastin domains follow at residues 20-54 and 57-92; these read EQEC…CPPH and EVTC…CPQK. Disulfide bonds link cysteine 23–cysteine 38, cysteine 33–cysteine 51, cysteine 36–cysteine 46, cysteine 60–cysteine 75, cysteine 70–cysteine 89, and cysteine 73–cysteine 84.

The protein belongs to the protease inhibitor I19 family. In terms of tissue distribution, expressed in hemolymph, ovaries, testes and fat body of adults but are absent in the gut. Also present in larval hemolymph and fat body.

The protein localises to the secreted. Its function is as follows. In vitro, is active against alpha-chymotrypsin and trypsin. In terms of biological role, in vitro, is active against alpha-chymotrypsin and pancreatic elastase. The sequence is that of Serine protease inhibitor I/II from Schistocerca gregaria (Desert locust).